We begin with the raw amino-acid sequence, 235 residues long: Vacuolar protein sorting-associated protein 60.1 (235 aa).

The tract at residues 1-29 is disordered; it reads MRRVFGAKKNTEPPPSIQDASDRINKRGD. A compositionally biased stretch (basic and acidic residues) spans 20 to 29; it reads ASDRINKRGD. Residues 99 to 148 adopt a coiled-coil conformation; that stretch reads LKDAQQTMTALKSANKELKGMMKTVKIQDIDNLQDEMMDLMDVSSEIQES. Residues 175–235 form a disordered region; the sequence is MGNETEADGM…PAVPRASLRG (61 aa).

It belongs to the SNF7 family. In terms of assembly, interacts with SKD1/VPS4 and LIP5. Interacts with VPS2.2.

The protein resides in the endosome. It localises to the multivesicular body membrane. Its function is as follows. Probable peripherally associated component of the endosomal sorting required for transport complex III (ESCRT-III) which is involved in multivesicular bodies (MVBs) formation and sorting of endosomal cargo proteins into MVBs. This Arabidopsis thaliana (Mouse-ear cress) protein is Vacuolar protein sorting-associated protein 60.1.